The sequence spans 232 residues: Clarin-1 (232 aa).

Residues Ile-8–Leu-28 traverse the membrane as a helical segment. A glycan (N-linked (GlcNAc...) asparagine) is linked at Asn-48. Transmembrane regions (helical) follow at residues Val-101–Tyr-121, Leu-135–Phe-155, and Thr-186–Ile-206.

Belongs to the clarin family. Widely expressed. Found in the retina.

It localises to the cell membrane. May have a role in the excitatory ribbon synapse junctions between hair cells and cochlear ganglion cells and presumably also in analogous synapses within the retina. This is Clarin-1 (CLRN1) from Homo sapiens (Human).